A 598-amino-acid chain; its full sequence is MVGSIVGSNMAATDARFLSSNFGNSFSINTRIHRFHDRSQIVIPRAQSSSSPSPSPPSDKKKTKTRPGTITTKESEETVAKKLDVAPPSPQSPPSPPTLKLDDVNPVGLGRRSRQIFDEVWRKFSGLGQMSRTTRPDEQETLDSLLIREGPMCEFAVPGAQNVTVLVVGATSRIGRIVVRKLMLRGYTVKALVRKQDEEVMSMLPRSVDIVVGDVGEPSTLKSAVESCSKIIYCATARSTITADLTRVDHLGVYNLTKAFQDYNNRLAQLRAGKSSKSKLLLAKFKSAESLDGWEIRQGTYFQDTTASKYDGGMDAKFEFTETERAEFSGYVFTRGGYVELSKKLSLPLGTTLDRYEGLVLSVGGNGRSYVVILEAGPSSDMSQSKQYFARISTKAGFCRVRVPFSAFRPVNPEDPPLDPFLVHTLTIRFEPKRQRPVDGLAGAQQDLRSFSLVFEYIKALPAGQETDFILVSCTGSGVEANRREQVLKAKRAGEDSLRRSGLGYTIIRPGPLKEEPGGQRALIFDQGNRISQGISCADVADICVKALHDSTARNKSFDVCHEYVAEQGIELYELVAHLPDKANNYLTPALSVLEKNT.

A chloroplast-targeting transit peptide spans 1–79 (MVGSIVGSNM…ITTKESEETV (79 aa)). The tract at residues 42–106 (VIPRAQSSSS…PTLKLDDVNP (65 aa)) is disordered. Basic and acidic residues predominate over residues 73-84 (KESEETVAKKLD). Residues 87–97 (PPSPQSPPSPP) are compositionally biased toward pro residues.

The protein belongs to the NmrA-type oxidoreductase family. As to quaternary structure, component of a high molecular weight complex containing psbA mRNA, OHP1, OHP2 and HCF244, and PSII core proteins D1/D2, HCF136 and HCF173. Interacts with LPE1.

The protein localises to the plastid. The protein resides in the chloroplast membrane. It localises to the chloroplast thylakoid membrane. It is found in the chloroplast stroma. Auxiliary factor required, together with HCF244, for the biogenesis of photosystem II (PSII), especially for the synthesis of the reaction center proteins (e.g. D1), via the regulation of the corresponding mRNA (e.g. psbA) translation initiation (ribosomal loading) and stabilization. In Arabidopsis thaliana (Mouse-ear cress), this protein is Protein HIGH CHLOROPHYLL FLUORESCENCE PHENOTYPE 173, chloroplastic.